Here is a 519-residue protein sequence, read N- to C-terminus: MEKKPYEIKIIQKKAKYHPDPTIVFNHICGSQKQTLLLETAEINKKNDLESIMIIDAALRISSERNHSVQLTALSKNGENILSILKSNLKQKVQMFIQDTSIRLEFPHFQKNLDEDKKIFSLSIFDTFRFIMKFFKNRNKVQKAMFFGGLFSYDLISNFELLPKLKKTQKCPHFCFYLAETLLIVDHQKKTCLIQNSLFTKNSHEQMRVEKRGREIQKKLEASLNSIPVRQEVKNSMLTANMSDEQYCSIIKKLQILIRKGEIFQVVPSRKFFLPCSNPLSAYQKLKKSNPSPYMFFMQDKDFTLFGASPESSLKYDDTTRQVELYPIAGTRPRGRNMDGTLNLDLDSRIELEMRTNHKELAEHLMLVDLARNDLARICEPGSRYVSDLVRVDKYPHVMHLVSRVVGTLKPELDALHAYAACMNMGTLTGAPKIRAMELIAEYEMEQRGSYGGAIGYFTDLGNLDTCITIRSAYVEDNIATIQSGSGIVYNSIPEDEVKEGINKAKRVINAIQHAHHLV.

L-tryptophan-binding positions include Thr-40 and 293–295 (PYM). 330–331 (GT) serves as a coordination point for chorismate. Glu-363 provides a ligand contact to Mg(2+). Residues Tyr-451, Arg-471, 485 to 487 (GSG), and Gly-487 each bind chorismate. Residue Glu-500 coordinates Mg(2+).

It belongs to the anthranilate synthase component I family. In terms of assembly, heterotetramer consisting of two non-identical subunits: a beta subunit (TrpG) and a large alpha subunit (TrpE). Mg(2+) is required as a cofactor.

It carries out the reaction chorismate + L-glutamine = anthranilate + pyruvate + L-glutamate + H(+). Its pathway is amino-acid biosynthesis; L-tryptophan biosynthesis; L-tryptophan from chorismate: step 1/5. Feedback inhibited by tryptophan. Its function is as follows. Part of a heterotetrameric complex that catalyzes the two-step biosynthesis of anthranilate, an intermediate in the biosynthesis of L-tryptophan. In the first step, the glutamine-binding beta subunit (TrpG) of anthranilate synthase (AS) provides the glutamine amidotransferase activity which generates ammonia as a substrate that, along with chorismate, is used in the second step, catalyzed by the large alpha subunit of AS (TrpE) to produce anthranilate. In the absence of TrpG, TrpE can synthesize anthranilate directly from chorismate and high concentrations of ammonia. In Buchnera aphidicola subsp. Diuraphis noxia, this protein is Anthranilate synthase component 1 (trpE).